The sequence spans 795 residues: Phenylalanine--tRNA ligase beta subunit (795 aa).

The 110-residue stretch at 39–148 folds into the tRNA-binding domain; sequence AGSFNGVVVG…ADAPLGTDIR (110 aa). Residues 401–476 form the B5 domain; the sequence is PKRATITLRR…RVYGYNNIPD (76 aa). Positions 454, 460, 463, and 464 each coordinate Mg(2+). Positions 701–794 constitute an FDX-ACB domain; the sequence is SRFPANRRDI…LKERFQASLR (94 aa).

This sequence belongs to the phenylalanyl-tRNA synthetase beta subunit family. Type 1 subfamily. In terms of assembly, tetramer of two alpha and two beta subunits. Mg(2+) is required as a cofactor.

It is found in the cytoplasm. It catalyses the reaction tRNA(Phe) + L-phenylalanine + ATP = L-phenylalanyl-tRNA(Phe) + AMP + diphosphate + H(+). This is Phenylalanine--tRNA ligase beta subunit from Salmonella paratyphi A (strain ATCC 9150 / SARB42).